Reading from the N-terminus, the 514-residue chain is tRNA-2-methylthio-N(6)-dimethylallyladenosine synthase (514 aa).

Residues 1 to 21 (MNEEQRKASSVDVLAERDKKA) are disordered. An MTTase N-terminal domain is found at 68–186 (RTFLIKTYGC…LPEILEEAYL (119 aa)). Residues Cys77, Cys113, Cys147, Cys223, Cys227, and Cys230 each contribute to the [4Fe-4S] cluster site. The Radical SAM core domain occupies 209 to 440 (REGNIKAWVN…KKVGHYSQIA (232 aa)). The region spanning 442–505 (SKYEGQTVTV…QYSLNGSFIK (64 aa)) is the TRAM domain.

The protein belongs to the methylthiotransferase family. MiaB subfamily. In terms of assembly, monomer. It depends on [4Fe-4S] cluster as a cofactor.

The protein resides in the cytoplasm. It catalyses the reaction N(6)-dimethylallyladenosine(37) in tRNA + (sulfur carrier)-SH + AH2 + 2 S-adenosyl-L-methionine = 2-methylsulfanyl-N(6)-dimethylallyladenosine(37) in tRNA + (sulfur carrier)-H + 5'-deoxyadenosine + L-methionine + A + S-adenosyl-L-homocysteine + 2 H(+). Its function is as follows. Catalyzes the methylthiolation of N6-(dimethylallyl)adenosine (i(6)A), leading to the formation of 2-methylthio-N6-(dimethylallyl)adenosine (ms(2)i(6)A) at position 37 in tRNAs that read codons beginning with uridine. The polypeptide is tRNA-2-methylthio-N(6)-dimethylallyladenosine synthase (Staphylococcus aureus (strain USA300 / TCH1516)).